The primary structure comprises 325 residues: mRNA decay factor CTH1 (325 aa).

2 consecutive C3H1-type zinc fingers follow at residues 204 to 232 (LYKT…HGLN) and 242 to 270 (NYRT…HGDD). A disordered region spans residues 284-306 (SKDTALTPLPTSLAPSNNDNITN). Over residues 292-306 (LPTSLAPSNNDNITN) the composition is skewed to polar residues.

Binds to specific AU-rich elements (ARE) in the 3'-untranslated region of target mRNAs and promotes their degradation. In response to iron deficiency, promotes the decay of many mRNAs encoding proteins involved in iron-dependent pathways. Negatively regulates primarily iron-dependent mitochondrial processes including respiration and amino acid biosynthesis. The polypeptide is mRNA decay factor CTH1 (CTH1) (Saccharomyces cerevisiae (strain ATCC 204508 / S288c) (Baker's yeast)).